The sequence spans 103 residues: MQPNDITFFQRFQDDILAGRKTITIRDESESHFKTGDVLRVGRFEDDGYFCTIEVTATSTVTLDTLTEKHAQQENMTLPELKKVIADIYPGQTQFYVIEFKCL.

Positions I6–K101 constitute an ASCH domain. Residue K21 is the Proton acceptor of the active site. T24 acts as the Nucleophile in catalysis. E74 functions as the Proton donor in the catalytic mechanism.

The protein belongs to the N(4)-acetylcytidine amidohydrolase family.

It carries out the reaction N(4)-acetylcytidine + H2O = cytidine + acetate + H(+). The enzyme catalyses N(4)-acetyl-2'-deoxycytidine + H2O = 2'-deoxycytidine + acetate + H(+). The catalysed reaction is N(4)-acetylcytosine + H2O = cytosine + acetate + H(+). Its function is as follows. Catalyzes the hydrolysis of N(4)-acetylcytidine (ac4C). The sequence is that of N(4)-acetylcytidine amidohydrolase (yqfB) from Escherichia fergusonii (strain ATCC 35469 / DSM 13698 / CCUG 18766 / IAM 14443 / JCM 21226 / LMG 7866 / NBRC 102419 / NCTC 12128 / CDC 0568-73).